We begin with the raw amino-acid sequence, 324 residues long: Lipoyl synthase (324 aa).

Positions 65, 70, 76, 91, 95, 98, and 302 each coordinate [4Fe-4S] cluster. A Radical SAM core domain is found at 77–291 (WEDREATFLI…AQYAEGLGFA (215 aa)).

The protein belongs to the radical SAM superfamily. Lipoyl synthase family. Requires [4Fe-4S] cluster as cofactor.

It is found in the cytoplasm. The enzyme catalyses [[Fe-S] cluster scaffold protein carrying a second [4Fe-4S](2+) cluster] + N(6)-octanoyl-L-lysyl-[protein] + 2 oxidized [2Fe-2S]-[ferredoxin] + 2 S-adenosyl-L-methionine + 4 H(+) = [[Fe-S] cluster scaffold protein] + N(6)-[(R)-dihydrolipoyl]-L-lysyl-[protein] + 4 Fe(3+) + 2 hydrogen sulfide + 2 5'-deoxyadenosine + 2 L-methionine + 2 reduced [2Fe-2S]-[ferredoxin]. It functions in the pathway protein modification; protein lipoylation via endogenous pathway; protein N(6)-(lipoyl)lysine from octanoyl-[acyl-carrier-protein]: step 2/2. In terms of biological role, catalyzes the radical-mediated insertion of two sulfur atoms into the C-6 and C-8 positions of the octanoyl moiety bound to the lipoyl domains of lipoate-dependent enzymes, thereby converting the octanoylated domains into lipoylated derivatives. This chain is Lipoyl synthase, found in Mycobacterium ulcerans (strain Agy99).